Here is a 234-residue protein sequence, read N- to C-terminus: Biotin transport ATP-binding protein BioM (234 aa).

The 230-residue stretch at 1 to 230 (MQAIDIGHVT…YIAAMQALAR (230 aa)) folds into the ABC transporter domain. Residue 35-42 (GRNGAGKS) participates in ATP binding.

It belongs to the ABC transporter superfamily. As to quaternary structure, part of a biotin transporter holocomplex composed of BioM, BioN and BioY. BioMN complexes can be readily purified, but not BioMY complexes. Only the BioMNY complex has ATPase activity.

Its subcellular location is the cell inner membrane. Required for biotin uptake under very low (pM) biotin concentrations but not under higher (nM) concentrations. This chain is Biotin transport ATP-binding protein BioM (bioM), found in Rhodobacter capsulatus (strain ATCC BAA-309 / NBRC 16581 / SB1003).